The sequence spans 435 residues: THACMDLKLGDKRMVFDPWLIGPAFARGWWLLHEPPSDWLERLSRADLIYISHMHSDHLSYPTLKKLAERRPDVPIYVGNTERPVFWNLNQSGVQLTNINVVPFGIWQQVDKNLRFMILMDGVHPEMDTCIIVEYKGHKILNTVDCTRPNGGRLPMKVALMMSDFAGGASGFPMTFSGGKFTEEWKAQFIKTERKKLLNYKARLVKDLQPRIYCPFPGYFVESHPADKYIKETNIKNDPNELNNLIKKNSEVVTWTPRPGATLDLGRMLKDPTDSKGIVEPPEGTKIYKDSWDFGPYLNILNAAIGDEIFRHSSWIKEYFTWAGFKDYNLVVRMIETDEDFSPLPGGYDYLVDFLDLSFPKERPSREHPYEEIRSRVDVIRHVVKNGLLWDDLYIGFQTRLQRDPDIYHHLFWNHFQIKLPLTPPDWKSFLMCSG.

The protein belongs to the CMP-Neu5Ac hydroxylase family. It depends on [2Fe-2S] cluster as a cofactor.

Its subcellular location is the cytoplasm. It carries out the reaction CMP-N-acetyl-beta-neuraminate + 2 Fe(II)-[cytochrome b5] + O2 + 2 H(+) = CMP-N-glycoloyl-beta-neuraminate + 2 Fe(III)-[cytochrome b5] + H2O. It functions in the pathway amino-sugar metabolism; N-acetylneuraminate metabolism. In terms of biological role, sialic acids are components of carbohydrate chains of glycoconjugates and are involved in cell-cell recognition and cell-pathogen interactions. Catalyzes the conversion of CMP-N-acetylneuraminic acid (CMP-Neu5Ac) into its hydroxylated derivative CMP-N-glycolylneuraminic acid (CMP-Neu5Gc), a sialic acid abundantly expressed at the surface of many cells. The protein is Cytidine monophosphate-N-acetylneuraminic acid hydroxylase of Sus scrofa (Pig).